The primary structure comprises 104 residues: UPF0134 protein MPN_104 (104 aa).

This sequence belongs to the UPF0134 family.

This chain is UPF0134 protein MPN_104, found in Mycoplasma pneumoniae (strain ATCC 29342 / M129 / Subtype 1) (Mycoplasmoides pneumoniae).